Consider the following 354-residue polypeptide: Transcription activator of gluconeogenesis ERT1-1 (354 aa).

The interval 1-29 is disordered; that stretch reads MSFYPILRGPAKQESPPPPPAPKKRRKTA. The segment at residues 32–60 is a DNA-binding region (zn(2)-C6 fungal-type); that stretch reads CLHCQKAHLTCDEGRPCARCIKKNMGDQC. Disordered regions lie at residues 71-111 and 128-169; these read LVGL…FGSS and DTSS…QGSP. Residues 81–98 show a composition bias toward low complexity; it reads QATQQKQQQQQQQQQAVQ. Polar residues predominate over residues 159–169; the sequence is SQTAGTPQGSP.

The protein belongs to the ERT1/acuK family.

It localises to the nucleus. In terms of biological role, transcription factor which regulates nonfermentable carbon utilization. Activator of gluconeogenetic genes. The protein is Transcription activator of gluconeogenesis ERT1-1 (ERT1-1) of Yarrowia lipolytica (strain CLIB 122 / E 150) (Yeast).